Reading from the N-terminus, the 671-residue chain is tRNA 5-methylaminomethyl-2-thiouridine biosynthesis bifunctional protein MnmC (671 aa).

The tract at residues 1-245 is tRNA (mnm(5)s(2)U34)-methyltransferase; it reads MVNVMNTLSF…KREMLWGEKP (245 aa). The FAD-dependent cmnm(5)s(2)U34 oxidoreductase stretch occupies residues 272 to 671; the sequence is VGGGVASLFV…RKLLKGSKVE (400 aa).

It in the N-terminal section; belongs to the methyltransferase superfamily. tRNA (mnm(5)s(2)U34)-methyltransferase family. The protein in the C-terminal section; belongs to the DAO family. It depends on FAD as a cofactor.

The protein resides in the cytoplasm. The enzyme catalyses 5-aminomethyl-2-thiouridine(34) in tRNA + S-adenosyl-L-methionine = 5-methylaminomethyl-2-thiouridine(34) in tRNA + S-adenosyl-L-homocysteine + H(+). Its function is as follows. Catalyzes the last two steps in the biosynthesis of 5-methylaminomethyl-2-thiouridine (mnm(5)s(2)U) at the wobble position (U34) in tRNA. Catalyzes the FAD-dependent demodification of cmnm(5)s(2)U34 to nm(5)s(2)U34, followed by the transfer of a methyl group from S-adenosyl-L-methionine to nm(5)s(2)U34, to form mnm(5)s(2)U34. The polypeptide is tRNA 5-methylaminomethyl-2-thiouridine biosynthesis bifunctional protein MnmC (Actinobacillus pleuropneumoniae serotype 5b (strain L20)).